We begin with the raw amino-acid sequence, 537 residues long: CTP synthase (537 aa).

Residues 1 to 268 (MGETKYIFVT…DSTILEKMGL (268 aa)) form an amidoligase domain region. Position 15 (Ser15) interacts with CTP. UTP is bound at residue Ser15. 16 to 21 (SLGKGI) provides a ligand contact to ATP. Tyr56 is a binding site for L-glutamine. Asp73 contacts ATP. The Mg(2+) site is built by Asp73 and Glu143. Residues 150–152 (DIE), 189–194 (KTKPTQ), and Lys225 each bind CTP. Residues 189 to 194 (KTKPTQ) and Lys225 each bind UTP. Residues 296 to 537 (NIALVGKYDL…VKAAIENEKN (242 aa)) form the Glutamine amidotransferase type-1 domain. Gly357 contributes to the L-glutamine binding site. The Nucleophile; for glutamine hydrolysis role is filled by Cys384. L-glutamine contacts are provided by residues 385–388 (LGMQ), Glu408, and Arg465. Residues His510 and Glu512 contribute to the active site.

The protein belongs to the CTP synthase family. Homotetramer.

It catalyses the reaction UTP + L-glutamine + ATP + H2O = CTP + L-glutamate + ADP + phosphate + 2 H(+). The catalysed reaction is L-glutamine + H2O = L-glutamate + NH4(+). It carries out the reaction UTP + NH4(+) + ATP = CTP + ADP + phosphate + 2 H(+). Its pathway is pyrimidine metabolism; CTP biosynthesis via de novo pathway; CTP from UDP: step 2/2. Its activity is regulated as follows. Allosterically activated by GTP, when glutamine is the substrate; GTP has no effect on the reaction when ammonia is the substrate. The allosteric effector GTP functions by stabilizing the protein conformation that binds the tetrahedral intermediate(s) formed during glutamine hydrolysis. Inhibited by the product CTP, via allosteric rather than competitive inhibition. Its function is as follows. Catalyzes the ATP-dependent amination of UTP to CTP with either L-glutamine or ammonia as the source of nitrogen. Regulates intracellular CTP levels through interactions with the four ribonucleotide triphosphates. This chain is CTP synthase, found in Bacteroides thetaiotaomicron (strain ATCC 29148 / DSM 2079 / JCM 5827 / CCUG 10774 / NCTC 10582 / VPI-5482 / E50).